A 361-amino-acid chain; its full sequence is Ribosomal RNA large subunit methyltransferase M (361 aa).

S-adenosyl-L-methionine is bound by residues S193, 226–229, D245, D265, and D283; that span reads CPGG. The active-site Proton acceptor is the K312.

This sequence belongs to the class I-like SAM-binding methyltransferase superfamily. RNA methyltransferase RlmE family. RlmM subfamily. Monomer.

It is found in the cytoplasm. The catalysed reaction is cytidine(2498) in 23S rRNA + S-adenosyl-L-methionine = 2'-O-methylcytidine(2498) in 23S rRNA + S-adenosyl-L-homocysteine + H(+). Its function is as follows. Catalyzes the 2'-O-methylation at nucleotide C2498 in 23S rRNA. The protein is Ribosomal RNA large subunit methyltransferase M of Histophilus somni (strain 129Pt) (Haemophilus somnus).